The primary structure comprises 113 residues: Protein FMC1 homolog (113 aa).

The segment at 94 to 113 (SAGLVGLKLPHQPGGKGWEP) is disordered.

This sequence belongs to the FMC1 family. Interacts with ATPAF2.

The protein resides in the mitochondrion. Plays a role in the assembly/stability of the mitochondrial membrane ATP synthase (F(1)F(0) ATP synthase or Complex V). This is Protein FMC1 homolog from Homo sapiens (Human).